Consider the following 612-residue polypeptide: Lysophospholipase (612 aa).

The signal sequence occupies residues 1 to 9; that stretch reads DITFAGVQR. The PLA2c domain maps to 24–571; the sequence is SCPASRPTVR…DRYCWNGTVN (548 aa). 17 N-linked (GlcNAc...) asparagine glycosylation sites follow: Asn-41, Asn-81, Asn-116, Asn-150, Asn-223, Asn-267, Asn-306, Asn-335, Asn-427, Asn-440, Asn-446, Asn-477, Asn-498, Asn-526, Asn-532, Asn-567, and Asn-571.

The protein belongs to the lysophospholipase family. In terms of processing, N-glycosylated.

The protein resides in the secreted. The enzyme catalyses a 1-acyl-sn-glycero-3-phosphocholine + H2O = sn-glycerol 3-phosphocholine + a fatty acid + H(+). In terms of biological role, catalyzes the release of fatty acids from lysophospholipids. In Penicillium chrysogenum (Penicillium notatum), this protein is Lysophospholipase.